Here is a 234-residue protein sequence, read N- to C-terminus: 2-C-methyl-D-erythritol 4-phosphate cytidylyltransferase (234 aa).

Belongs to the IspD/TarI cytidylyltransferase family. IspD subfamily.

It catalyses the reaction 2-C-methyl-D-erythritol 4-phosphate + CTP + H(+) = 4-CDP-2-C-methyl-D-erythritol + diphosphate. Its pathway is isoprenoid biosynthesis; isopentenyl diphosphate biosynthesis via DXP pathway; isopentenyl diphosphate from 1-deoxy-D-xylulose 5-phosphate: step 2/6. Its function is as follows. Catalyzes the formation of 4-diphosphocytidyl-2-C-methyl-D-erythritol from CTP and 2-C-methyl-D-erythritol 4-phosphate (MEP). The protein is 2-C-methyl-D-erythritol 4-phosphate cytidylyltransferase of Pseudomonas aeruginosa (strain UCBPP-PA14).